Consider the following 254-residue polypeptide: 3-deoxy-manno-octulosonate cytidylyltransferase (254 aa).

Belongs to the KdsB family.

It localises to the cytoplasm. The enzyme catalyses 3-deoxy-alpha-D-manno-oct-2-ulosonate + CTP = CMP-3-deoxy-beta-D-manno-octulosonate + diphosphate. It functions in the pathway nucleotide-sugar biosynthesis; CMP-3-deoxy-D-manno-octulosonate biosynthesis; CMP-3-deoxy-D-manno-octulosonate from 3-deoxy-D-manno-octulosonate and CTP: step 1/1. It participates in bacterial outer membrane biogenesis; lipopolysaccharide biosynthesis. Its function is as follows. Activates KDO (a required 8-carbon sugar) for incorporation into bacterial lipopolysaccharide in Gram-negative bacteria. This is 3-deoxy-manno-octulosonate cytidylyltransferase from Nitrobacter winogradskyi (strain ATCC 25391 / DSM 10237 / CIP 104748 / NCIMB 11846 / Nb-255).